A 447-amino-acid chain; its full sequence is Transducin beta-like protein 2 (447 aa).

Residues 38–72 form a disordered region; the sequence is RSGRPACQKANGFPPDKSSGSKKQKQYQRIRKEKP. Residues 57-69 are compositionally biased toward basic residues; it reads GSKKQKQYQRIRK. WD repeat units lie at residues 88-127, 134-174, 186-226, 228-267, 277-316, 329-367, and 371-409; these read SHSGNISCMDFSSNGKYLATCADDRTIRIWSTKDFLQREH, VELD…DGGY, KHKA…STIN, NQMNNTHAAVSPCGRFVASCGFTPDVKVWEVCFGKKGEFQ, GHSAAVHSFAFSNDSRRMASVSKDGTWKLWDTDVEYKKKQ, AAGAAPCRLALSPNAQVLALASGSSIHLYNTRRGEKEEC, and VHGECIANLSFDITGRFLASCGDRAVRLFHNTPGHRAMV. A Glycyl lysine isopeptide (Lys-Gly) (interchain with G-Cter in SUMO2) cross-link involves residue lysine 168. Threonine 433 carries the phosphothreonine; by ATM or ATR modification.

This chain is Transducin beta-like protein 2 (TBL2), found in Homo sapiens (Human).